A 41-amino-acid chain; its full sequence is Trypsin inhibitor 2c (41 aa).

2 disulfide bridges follow: Cys11/Cys32 and Cys15/Cys28.

Inhibits bovine trypsin with a Ki of 0.174 nM and trypsin-like proteases from G.mellonella larvae. Has no activity against serine proteases chymotrypsin, subtilisin and elastase. Has no activity against cysteine proteases from beetle gut. This chain is Trypsin inhibitor 2c, found in Fagopyrum esculentum (Common buckwheat).